We begin with the raw amino-acid sequence, 512 residues long: Maturase K (512 aa).

This sequence belongs to the intron maturase 2 family. MatK subfamily.

The protein resides in the plastid. The protein localises to the chloroplast. Functionally, usually encoded in the trnK tRNA gene intron. Probably assists in splicing its own and other chloroplast group II introns. The sequence is that of Maturase K from Lilium tsingtauense (Twilight lily).